A 333-amino-acid polypeptide reads, in one-letter code: Probable tRNA pseudouridine synthase B (333 aa).

Residue Asp66 is the Nucleophile of the active site. The region spanning 233-308 (LKKIIVKDSA…EVVEITRVIM (76 aa)) is the PUA domain.

This sequence belongs to the pseudouridine synthase TruB family. Type 2 subfamily.

The catalysed reaction is uridine(55) in tRNA = pseudouridine(55) in tRNA. Its function is as follows. Could be responsible for synthesis of pseudouridine from uracil-55 in the psi GC loop of transfer RNAs. This chain is Probable tRNA pseudouridine synthase B, found in Methanococcus maripaludis (strain C7 / ATCC BAA-1331).